The sequence spans 159 residues: MKIKVGFGFDVHQLVEGRELWLGGILLEHEKGLLGHSDADVLVHAICDALLGAANMRDIGYHFPDNAGEYKNIDSKILLKKTVELIATKGYQIGNIDATICAERPKLKAHIPSMQQVLAEVMGIDADDISIKATTTEKLGFTGREEGISAYATVLINRV.

A divalent metal cation contacts are provided by Asp10 and His12. 4-CDP-2-C-methyl-D-erythritol 2-phosphate-binding positions include 10–12 and 36–37; these read DVH and HS. His44 lines the a divalent metal cation pocket. 4-CDP-2-C-methyl-D-erythritol 2-phosphate is bound by residues 58–60, 134–137, Phe141, and Arg144; these read DIG and TTTE.

Belongs to the IspF family. As to quaternary structure, homotrimer. Requires a divalent metal cation as cofactor.

The enzyme catalyses 4-CDP-2-C-methyl-D-erythritol 2-phosphate = 2-C-methyl-D-erythritol 2,4-cyclic diphosphate + CMP. Its pathway is isoprenoid biosynthesis; isopentenyl diphosphate biosynthesis via DXP pathway; isopentenyl diphosphate from 1-deoxy-D-xylulose 5-phosphate: step 4/6. Its function is as follows. Involved in the biosynthesis of isopentenyl diphosphate (IPP) and dimethylallyl diphosphate (DMAPP), two major building blocks of isoprenoid compounds. Catalyzes the conversion of 4-diphosphocytidyl-2-C-methyl-D-erythritol 2-phosphate (CDP-ME2P) to 2-C-methyl-D-erythritol 2,4-cyclodiphosphate (ME-CPP) with a corresponding release of cytidine 5-monophosphate (CMP). In Bacteroides fragilis (strain ATCC 25285 / DSM 2151 / CCUG 4856 / JCM 11019 / LMG 10263 / NCTC 9343 / Onslow / VPI 2553 / EN-2), this protein is 2-C-methyl-D-erythritol 2,4-cyclodiphosphate synthase.